Here is a 533-residue protein sequence, read N- to C-terminus: Tyrosine decarboxylase (533 aa).

Residues 1–22 (MAPPSHCHTINGGAPRNGAIPE) form a disordered region. Residues Thr281 and Asn336 each contribute to the pyridoxal 5'-phosphate site. N6-(pyridoxal phosphate)lysine is present on Lys339.

It belongs to the group II decarboxylase family. It depends on pyridoxal 5'-phosphate as a cofactor.

The catalysed reaction is L-tyrosine + H(+) = tyramine + CO2. Functionally, catalyzes the decarboxylation of L-tyrosine to tyramine, which can be converted to the hydroxycinnamic acid amides feruloyltyramine and 4-coumaroyltyramine. Possesses low tryptophan decarboxylase activity. The chain is Tyrosine decarboxylase from Oryza sativa subsp. japonica (Rice).